The chain runs to 434 residues: Histidinol dehydrogenase (434 aa).

Residues Tyr-130, Gln-192, and Asn-215 each coordinate NAD(+). Substrate is bound by residues Ser-238, Gln-260, and His-263. Zn(2+)-binding residues include Gln-260 and His-263. Residues Glu-328 and His-329 each act as proton acceptor in the active site. Residues His-329, Asp-362, Glu-416, and His-421 each contribute to the substrate site. Asp-362 contributes to the Zn(2+) binding site. His-421 lines the Zn(2+) pocket.

This sequence belongs to the histidinol dehydrogenase family. Zn(2+) is required as a cofactor.

It catalyses the reaction L-histidinol + 2 NAD(+) + H2O = L-histidine + 2 NADH + 3 H(+). The protein operates within amino-acid biosynthesis; L-histidine biosynthesis; L-histidine from 5-phospho-alpha-D-ribose 1-diphosphate: step 9/9. Catalyzes the sequential NAD-dependent oxidations of L-histidinol to L-histidinaldehyde and then to L-histidine. This chain is Histidinol dehydrogenase, found in Synechococcus sp. (strain ATCC 27144 / PCC 6301 / SAUG 1402/1) (Anacystis nidulans).